The primary structure comprises 284 residues: MELYNGERPSVFRLLGKYMRKGLYSILTQGPIPTHIAFILDGNGRFAKKHKLPEGGGHKAGFLALLNVLTYCYELGVKYATIYAFSIDNFRRKPHEVQYVMNLMLEKIEGMIMEESIINAYDICVRFVGNLKLLDEPLKTAADKIMRATAKNSKFVLLLAVCYTSTDEIVHAVEESSKDKLKSDEICNDGNGDCVIKIEEMEPYSEIKLVELERNTYINPYPDVLIRTSGETRLSNYLLWQTTNCILYSPHALWPEIGLRHVVWAVINCQRHYSYLEKHKEYLK.

The active site involves Asp41.

It belongs to the UPP synthase family. As to expression, predominantly expressed in latex.

It catalyses the reaction (cis-prenyl)(n)-diphosphate + isopentenyl diphosphate = (cis-prenyl)(n+1)-diphosphate + diphosphate. In terms of biological role, proposed to be involved in rubber biosynthesis as a particle-bound rubber transferase responsible for the cis-1,4-polymerization of isoprene subunits. Probably requires additional factors for the production of high molecular mass rubber. The protein is Rubber cis-polyprenyltransferase HRT2 (HRT2) of Hevea brasiliensis (Para rubber tree).